The sequence spans 274 residues: Rhamnulose-1-phosphate aldolase (274 aa).

Residue E117 is part of the active site. Zn(2+) contacts are provided by H141, H143, and H212.

It belongs to the aldolase class II family. RhaD subfamily. In terms of assembly, homotetramer. Zn(2+) is required as a cofactor.

It localises to the cytoplasm. The enzyme catalyses L-rhamnulose 1-phosphate = (S)-lactaldehyde + dihydroxyacetone phosphate. The protein operates within carbohydrate degradation; L-rhamnose degradation; glycerone phosphate from L-rhamnose: step 3/3. Catalyzes the reversible cleavage of L-rhamnulose-1-phosphate to dihydroxyacetone phosphate (DHAP) and L-lactaldehyde. The polypeptide is Rhamnulose-1-phosphate aldolase (Pectobacterium carotovorum subsp. carotovorum (strain PC1)).